The chain runs to 494 residues: MGSTSSLYAAIDLGSNSFHMLVVREVAGSIQTLTRIKRKVRLAAGLNSENDLSNEAMERGWQCLRLFAERLQDIPPSQIRVVATATLRLAVNAGDFIAKAQEILGCPVQVISGEEEARLIYQGVAHTTGGADQRLVVDISGASTELVTGTGAQTTSLFSLSMGCVTWLERYFADRNLGQENFDAAEKAAREVLRPVADELRYHGWKVCVGASGTVQALQEIMMAQGMDERITLEKLQQLKQRAIHCGRLEELEIDGLTLERALVFPSGLAILIAIFTELNIQCMTLAGGALREGLVYGMLHLAVEQDIRSRTLRNIQRRFMIDIDQAQRVAKVAANFFDQVENEWHLEAISRDLLISACQLHEIGLSVDFKQAPQHAAYLVRNLDLPGFTPAQKKLLATLLLNQTNPVDLSSLHQQNAVPPRVAEQLCRLLRLAIIFASRRRDDLVPEMTLQANHELLTLTLPQGWLTQHPLGKEIIAQENQWQSYVHWPLEVH.

The protein belongs to the GppA/Ppx family. GppA subfamily.

It carries out the reaction guanosine 3'-diphosphate 5'-triphosphate + H2O = guanosine 3',5'-bis(diphosphate) + phosphate + H(+). The protein operates within purine metabolism; ppGpp biosynthesis; ppGpp from GTP: step 2/2. Functionally, catalyzes the conversion of pppGpp to ppGpp. Guanosine pentaphosphate (pppGpp) is a cytoplasmic signaling molecule which together with ppGpp controls the 'stringent response', an adaptive process that allows bacteria to respond to amino acid starvation, resulting in the coordinated regulation of numerous cellular activities. The protein is Guanosine-5'-triphosphate,3'-diphosphate pyrophosphatase of Shigella flexneri serotype 5b (strain 8401).